A 230-amino-acid polypeptide reads, in one-letter code: Octanoyltransferase (230 aa).

The BPL/LPL catalytic domain maps to 38 to 215; it reads AGGADTLLLL…AVCAALDGVL (178 aa). Residues 76–83, 145–147, and 158–160 contribute to the substrate site; these read RGGKITWH, AIG, and GFA. Cysteine 176 acts as the Acyl-thioester intermediate in catalysis.

Belongs to the LipB family.

It localises to the cytoplasm. The catalysed reaction is octanoyl-[ACP] + L-lysyl-[protein] = N(6)-octanoyl-L-lysyl-[protein] + holo-[ACP] + H(+). The protein operates within protein modification; protein lipoylation via endogenous pathway; protein N(6)-(lipoyl)lysine from octanoyl-[acyl-carrier-protein]: step 1/2. In terms of biological role, catalyzes the transfer of endogenously produced octanoic acid from octanoyl-acyl-carrier-protein onto the lipoyl domains of lipoate-dependent enzymes. Lipoyl-ACP can also act as a substrate although octanoyl-ACP is likely to be the physiological substrate. This is Octanoyltransferase from Mycobacterium tuberculosis (strain ATCC 25177 / H37Ra).